The following is a 508-amino-acid chain: Photosystem II CP47 reaction center protein (508 aa).

6 helical membrane passes run 21–36 (SVHI…WAGS), 101–115 (IVFS…IWHW), 140–156 (GIHL…FGAF), 203–218 (IAAG…FHLS), 237–252 (VLSS…AFVV), and 457–472 (SFAL…HGAR).

This sequence belongs to the PsbB/PsbC family. PsbB subfamily. PSII is composed of 1 copy each of membrane proteins PsbA, PsbB, PsbC, PsbD, PsbE, PsbF, PsbH, PsbI, PsbJ, PsbK, PsbL, PsbM, PsbT, PsbX, PsbY, PsbZ, Psb30/Ycf12, at least 3 peripheral proteins of the oxygen-evolving complex and a large number of cofactors. It forms dimeric complexes. Binds multiple chlorophylls. PSII binds additional chlorophylls, carotenoids and specific lipids. serves as cofactor.

It is found in the plastid. The protein resides in the chloroplast thylakoid membrane. In terms of biological role, one of the components of the core complex of photosystem II (PSII). It binds chlorophyll and helps catalyze the primary light-induced photochemical processes of PSII. PSII is a light-driven water:plastoquinone oxidoreductase, using light energy to abstract electrons from H(2)O, generating O(2) and a proton gradient subsequently used for ATP formation. The sequence is that of Photosystem II CP47 reaction center protein from Aethionema cordifolium (Lebanon stonecress).